Here is a 409-residue protein sequence, read N- to C-terminus: Autophagy-related protein 21 (409 aa).

WD repeat units lie at residues 1–35 (MKVL…KCFE), 221–261 (VHKG…TLQS), 273–312 (TRPC…QQNK), and 361–402 (KVDD…GECI). Positions 269–273 (FRRGT) match the L/FRRG motif motif.

Belongs to the WD repeat PROPPIN family.

The protein resides in the cytoplasm. Its subcellular location is the membrane. It is found in the vacuole membrane. Functionally, required for cytoplasm to vacuole transport (Cvt) vesicles formation and mitophagy. Involved in binding of phosphatidylethanolamine to ATG8 and in recruitment of ATG8 and ATG5 to the pre-autophagosomal structure. Protects ATG8 from ARG4-mediated cleavage. The sequence is that of Autophagy-related protein 21 (ATG21) from Eremothecium gossypii (strain ATCC 10895 / CBS 109.51 / FGSC 9923 / NRRL Y-1056) (Yeast).